Reading from the N-terminus, the 142-residue chain is MLMPRRVKYRKQQRGRMKGKAKGGTFVQFGEWGLKALEPAWITAQQIEACRIAMLRVMKRSGKIWIRIFPDKPYTKKPPESRMGKGKGNVEGWVAVVKPGKILFEVAGVDEETAHEALRYAASKLPIATKIVPRHHIGGEAV.

Belongs to the universal ribosomal protein uL16 family. As to quaternary structure, part of the 50S ribosomal subunit.

Its function is as follows. Binds 23S rRNA and is also seen to make contacts with the A and possibly P site tRNAs. This is Large ribosomal subunit protein uL16 from Thermotoga maritima (strain ATCC 43589 / DSM 3109 / JCM 10099 / NBRC 100826 / MSB8).